The sequence spans 782 residues: MRQKTLDVLEFEKIKSLVANETISDLGLEKVNQMMPATNFETVVFQMEETDEIAQIYNKHRLPSLSGLSKVSAFIHRADIGGVLNVSELNLIKRLIQVQNQFKTFYNQLVEEDEGVKYPILDDKMNQLPVLTDLFHQINETCDTYDLYDNASYELQGIRSKISSTNQRIRQNLDRIVKSQANQKKLSDAIVTVRNERNVIPVKAEYRQDFNGIVHDQSASGQTLYIEPSSVVEMNNQISRLRHDEAIEKERVLTQLTGYVAADKDALLVAEQVMGQLDFLIAKARYSRSIKGTKPIFKEERTVYLPKAYHPLLNRETVVANTIEFMEDIETVIITGPNTGGKTVTLKTLGLIIVMAQSGLLIPTLDGSQLSVFKNVYCDIGDEQSIEQSLSTFSSHMTNIVEILKHADKHSLVLFDELGAGTDPSEGAALAMSILDHVRKIGSLVMATTHYPELKAYSYNREGVMNASVEFDVDTLSPTYKLLMGVPGRSNAFDISKKLGLSLNIINKAKTMIGTDEKEINEMIESLERNYKRVETQRLELDRLVKEAEQVHDDLSKQYQQFQNYEKSLIEEAKEKANQKIKAATKEADDIIKDLRQLREQKGADVKEHELIDKKKRLDDHYEAKSIKQNVQKQKYDKIVAGDEVKVLSYGQKGEVLEIVNDEEAIVQMGIIKMKLPIEDLEKKQKEKVKPTKMVTRQNRQTIKTELDLRGYRYEDALIELDQYLDQAVLSNYEQVYIIHGKGTGALQKGVQQHLKKHKSVSDFRGGMPSEGGFGVTVATLK.

Residue 336-343 (GPNTGGKT) participates in ATP binding. Residues 707–782 (LDLRGYRYED…GFGVTVATLK (76 aa)) enclose the Smr domain.

The protein belongs to the DNA mismatch repair MutS family. MutS2 subfamily. Homodimer. Binds to stalled ribosomes, contacting rRNA.

Endonuclease that is involved in the suppression of homologous recombination and thus may have a key role in the control of bacterial genetic diversity. Its function is as follows. Acts as a ribosome collision sensor, splitting the ribosome into its 2 subunits. Detects stalled/collided 70S ribosomes which it binds and splits by an ATP-hydrolysis driven conformational change. Acts upstream of the ribosome quality control system (RQC), a ribosome-associated complex that mediates the extraction of incompletely synthesized nascent chains from stalled ribosomes and their subsequent degradation. Probably generates substrates for RQC. The sequence is that of Endonuclease MutS2 from Staphylococcus aureus (strain Mu50 / ATCC 700699).